A 246-amino-acid polypeptide reads, in one-letter code: UPF0309 protein OB3413 (246 aa).

The 180-residue stretch at 33–212 folds into the SIS domain; that stretch reads MATAVMNGNS…VLKMIEIFEE (180 aa).

Belongs to the UPF0309 family.

The chain is UPF0309 protein OB3413 from Oceanobacillus iheyensis (strain DSM 14371 / CIP 107618 / JCM 11309 / KCTC 3954 / HTE831).